Here is a 300-residue protein sequence, read N- to C-terminus: Chaperone protein dnaJ 50 (300 aa).

An N-terminal signal peptide occupies residues Met-1–Ala-27. The Lumenal portion of the chain corresponds to Ile-28–Pro-122. Residues Asp-34–Ile-98 enclose the J domain. Residues Asn-46 and Asn-88 are each glycosylated (N-linked (GlcNAc...) asparagine). The chain crosses the membrane as a helical span at residues Arg-123–Ala-143. Residues Arg-144–Ser-206 lie on the Cytoplasmic side of the membrane. The chain crosses the membrane as a helical span at residues Val-207–Val-227. At Trp-228–Arg-300 the chain is on the lumenal side.

Expressed in leaves, flower buds and flowers.

It localises to the endoplasmic reticulum membrane. May play a role in protein folding in the endoplasmic reticulum. In Arabidopsis thaliana (Mouse-ear cress), this protein is Chaperone protein dnaJ 50 (C50).